Here is a 131-residue protein sequence, read N- to C-terminus: Transcription antitermination protein NusB (131 aa).

Belongs to the NusB family.

Functionally, involved in transcription antitermination. Required for transcription of ribosomal RNA (rRNA) genes. Binds specifically to the boxA antiterminator sequence of the ribosomal RNA (rrn) operons. In Campylobacter hominis (strain ATCC BAA-381 / DSM 21671 / CCUG 45161 / LMG 19568 / NCTC 13146 / CH001A), this protein is Transcription antitermination protein NusB.